Consider the following 498-residue polypeptide: Glycerol kinase (498 aa).

Thr-12 lines the ADP pocket. ATP-binding residues include Thr-12, Thr-13, and Ser-14. Residue Thr-12 coordinates sn-glycerol 3-phosphate. Arg-16 is an ADP binding site. The sn-glycerol 3-phosphate site is built by Arg-82, Glu-83, and Tyr-134. 3 residues coordinate glycerol: Arg-82, Glu-83, and Tyr-134. His-230 carries the post-translational modification Phosphohistidine; by HPr. Asp-244 is a sn-glycerol 3-phosphate binding site. Glycerol contacts are provided by Asp-244 and Gln-245. The ADP site is built by Thr-266 and Gly-309. Positions 266, 309, 313, and 410 each coordinate ATP. ADP is bound by residues Gly-410 and Asn-414.

It belongs to the FGGY kinase family. In terms of assembly, homotetramer and homodimer (in equilibrium). Post-translationally, the phosphoenolpyruvate-dependent sugar phosphotransferase system (PTS), including enzyme I, and histidine-containing protein (HPr) are required for the phosphorylation, which leads to the activation of the enzyme.

The enzyme catalyses glycerol + ATP = sn-glycerol 3-phosphate + ADP + H(+). Its pathway is polyol metabolism; glycerol degradation via glycerol kinase pathway; sn-glycerol 3-phosphate from glycerol: step 1/1. With respect to regulation, activated by phosphorylation and inhibited by fructose 1,6-bisphosphate (FBP). In terms of biological role, key enzyme in the regulation of glycerol uptake and metabolism. Catalyzes the phosphorylation of glycerol to yield sn-glycerol 3-phosphate. This chain is Glycerol kinase, found in Staphylococcus aureus (strain bovine RF122 / ET3-1).